Consider the following 207-residue polypeptide: Histone H1-like protein HC2 (207 aa).

Composition is skewed to basic residues over residues 1–50 and 59–72; these read MLGV…KTVA and PAAKKTAAKKAPVR. The segment at 1–72 is disordered; that stretch reads MLGVQKKRST…KTAAKKAPVR (72 aa). 3 tandem repeats follow at residues 35–58, 71–94, and 113–136. Residues 35-136 are 3 X 24 AA repeats of V-R-K-V-A-A-K-K-T-V-A-R-K-T-V-A-K-K-A-V-A-A-R-K; it reads VRKVAAKKTV…VAKKAVAARK (102 aa).

This sequence belongs to the histone H1/H5 family. HCT subfamily.

In terms of biological role, might have a role in establishing the nucleoid structure of elementary bodies. This chain is Histone H1-like protein HC2 (hctB), found in Chlamydia muridarum (strain MoPn / Nigg).